Reading from the N-terminus, the 97-residue chain is MDKRRAHVWISGRVHGVAFRAYTQEAAYHLGIGGWVRNLPDGRVEAVFEGDADKVARMVEWCRKGSPMSRVTEVEVREEDFRGEFVRFEITFGRWGA.

One can recognise an Acylphosphatase-like domain in the interval 5–92 (RAHVWISGRV…GEFVRFEITF (88 aa)). Active-site residues include R20 and N38.

This sequence belongs to the acylphosphatase family.

It catalyses the reaction an acyl phosphate + H2O = a carboxylate + phosphate + H(+). This Syntrophobacter fumaroxidans (strain DSM 10017 / MPOB) protein is Acylphosphatase (acyP).